We begin with the raw amino-acid sequence, 251 residues long: Probable transcriptional regulatory protein NFA_37020 (251 aa).

The protein belongs to the TACO1 family.

The protein localises to the cytoplasm. The chain is Probable transcriptional regulatory protein NFA_37020 from Nocardia farcinica (strain IFM 10152).